Consider the following 479-residue polypeptide: Solute carrier family 7 member 13 (479 aa).

At 1–14 (MAMDIEKKIYLKRQ) the chain is on the cytoplasmic side. Residues 15 to 35 (LGYFWGTNFLIINIIGAGIFV) form a helical membrane-spanning segment. Residues 36 to 47 (SPKGVLQYSSMN) are Extracellular-facing. A helical transmembrane segment spans residues 48–68 (VGVSLCVWVFCAVLSMTSTLC). Over 69–89 (AAEIGITFPYTVAHYYFLKRC) the chain is Cytoplasmic. Residues 90-110 (FGPFVAFLRLWTSLFTGPGVL) form a helical membrane-spanning segment. Residues 111 to 129 (ASQALLLAEYGIQPFYPSC) lie on the Extracellular side of the membrane. Residues 130–150 (SAPAVPKKCLALAMLWIVGIL) traverse the membrane as a helical segment. Residues 151–165 (NSRGVKELSWLQTVS) are Cytoplasmic-facing. Residues 166–186 (MVLKMGILSFISLSGLFLLVT) traverse the membrane as a helical segment. The Extracellular portion of the chain corresponds to 187 to 208 (GRKENVRRLQNAFDAEFPEVSR). The helical transmembrane segment at 209–229 (LIEAIFQGYFAFSGGGSFTYV) threads the bilayer. Topologically, residues 230–242 (AGELKEPSKTIPR) are cytoplasmic. Residues 243-263 (CIFTALPLVTVVYLLANLSYL) traverse the membrane as a helical segment. At 264–289 (TVLSPQELLSSDAVALTWTDRVIPQL) the chain is on the extracellular side. Residues 290–310 (TWSVPFAISASLFSNLVTSVF) form a helical membrane-spanning segment. Over 311-338 (ETSRTSYIASRNGQLPLLCSTLNVHSSP) the chain is Cytoplasmic. The chain crosses the membrane as a helical span at residues 339–359 (FIAVLLDVSMGSIAIVLTNLI). Residue Glu360 is a topological domain, extracellular. Residues 361–381 (LINYLFFVFSIWTVLSVIGIL) form a helical membrane-spanning segment. The Cytoplasmic portion of the chain corresponds to 382–396 (KLRYQEPNLHRPYKV). Residues 397 to 417 (FSPFLFITAAISLSMVLIPLI) traverse the membrane as a helical segment. Residues 418-423 (KSPKMQ) lie on the Extracellular side of the membrane. A helical transmembrane segment spans residues 424–444 (YIYVFLFFLGGLLFYVPLIHF). Topologically, residues 445 to 479 (KLKLIWFQKLTCYLQLLFNICIPDVSDEHVAEEES) are cytoplasmic.

This sequence belongs to the amino acid-polyamine-organocation (APC) superfamily. As to quaternary structure, disulfide-linked heterodimer composed of the catalytic light subunit SLC7A13 and the heavy subunit SLC3A1.

It is found in the apical cell membrane. It carries out the reaction L-cystine(out) + L-aspartate(in) = L-cystine(in) + L-aspartate(out). It catalyses the reaction L-cystine(out) = L-cystine(in). The catalysed reaction is L-aspartate(in) + L-glutamate(out) = L-aspartate(out) + L-glutamate(in). The enzyme catalyses L-aspartate(in) + L-glutamine(out) = L-aspartate(out) + L-glutamine(in). It carries out the reaction L-aspartate(in) + L-methionine(out) = L-aspartate(out) + L-methionine(in). It catalyses the reaction L-leucine(out) + L-aspartate(in) = L-leucine(in) + L-aspartate(out). The catalysed reaction is L-valine(out) + L-aspartate(in) = L-valine(in) + L-aspartate(out). The enzyme catalyses L-aspartate(in) + L-phenylalanine(out) = L-aspartate(out) + L-phenylalanine(in). It carries out the reaction L-tyrosine(out) + L-aspartate(in) = L-tyrosine(in) + L-aspartate(out). It catalyses the reaction L-tryptophan(out) + L-aspartate(in) = L-tryptophan(in) + L-aspartate(out). Associates with SLC3A1/rBAT to form a functional heterodimeric complex that transports anionic and neutral amino acids across the apical plasma membrane of renal epithelium. Preferentially mediates exchange transport, but can also operate via facilitated diffusion. May act as a major transporter for L-cystine in late proximal tubules, ensuring its reabsorption from the luminal fluid in exchange for cytosolic L-glutamate or L-aspartate. In Rattus norvegicus (Rat), this protein is Solute carrier family 7 member 13 (Slc7a13).